Here is a 568-residue protein sequence, read N- to C-terminus: MNWQGWAEIAFILGLTVALGWPLGLFLARLWEGEQTWLDPVLKPVERLVYRACGIDPRQSQTWSSYALALLAFSAASFILLYAILRLQGWLPLNPQGFAGLPPHLAFNTAISFVSNTNWQSYVPEATVSAFSQMAGLTSHNFLSAAAGIAVAAAVTRAFAANREEGLGNFWVDLTRVSLYLLLPLSIVIALVFVALGEPQTLSAHVTATTLEGVQQTIALFPTASQEAIKQLGTNGGGIFNANSAHPFENPNPLTNLIEIVEMNVLGFACVVAFGRLVSARRDARALITVMAIFVAVAASVIYWTETRPAPALVGAQAEASVNMEGKEVRFGAPATAIWTAATTGASDGGVNAMFDSFMPLGGGMAMFMIQLGEILPGGVGSGLYGMIVLALIAVFVAGLMVGRTPEYLGKKVEAREVKYAMLAVLILPLAILGFSAAAAVLPVALEGLANTGAHGLSEILYAYSSATGNNGSAFAGFSANTPWWNTTLGIAMLLGRFGYVIPVLAIAGSLAAKPKLTVTAGTFPTDGPLFIGLLIGVILILGGLQFFPALALGPIVEHFQVLQALAR.

10 helical membrane passes run 7 to 27 (AEIA…GLFL), 65 to 85 (SYAL…YAIL), 135 to 155 (AGLT…AAAV), 177 to 197 (VSLY…VALG), 254 to 274 (LTNL…VVAF), 286 to 306 (ALIT…YWTE), 383 to 403 (GLYG…LMVG), 422 to 442 (MLAV…AAVL), 489 to 509 (LGIA…AIAG), and 530 to 550 (LFIG…FFPA).

It belongs to the KdpA family. In terms of assembly, the system is composed of three essential subunits: KdpA, KdpB and KdpC.

The protein resides in the cell inner membrane. Functionally, part of the high-affinity ATP-driven potassium transport (or Kdp) system, which catalyzes the hydrolysis of ATP coupled with the electrogenic transport of potassium into the cytoplasm. This subunit binds the periplasmic potassium ions and delivers the ions to the membrane domain of KdpB through an intramembrane tunnel. The sequence is that of Potassium-transporting ATPase potassium-binding subunit from Beijerinckia indica subsp. indica (strain ATCC 9039 / DSM 1715 / NCIMB 8712).